A 317-amino-acid polypeptide reads, in one-letter code: Aspartate carbamoyltransferase catalytic subunit (317 aa).

The carbamoyl phosphate site is built by Arg64 and Thr65. L-aspartate is bound at residue Lys92. Arg114, His142, and Gln145 together coordinate carbamoyl phosphate. L-aspartate is bound by residues Arg176 and Arg230. Residues Gly271 and Pro272 each coordinate carbamoyl phosphate.

Belongs to the aspartate/ornithine carbamoyltransferase superfamily. ATCase family. In terms of assembly, heterododecamer (2C3:3R2) of six catalytic PyrB chains organized as two trimers (C3), and six regulatory PyrI chains organized as three dimers (R2).

It catalyses the reaction carbamoyl phosphate + L-aspartate = N-carbamoyl-L-aspartate + phosphate + H(+). The protein operates within pyrimidine metabolism; UMP biosynthesis via de novo pathway; (S)-dihydroorotate from bicarbonate: step 2/3. Its function is as follows. Catalyzes the condensation of carbamoyl phosphate and aspartate to form carbamoyl aspartate and inorganic phosphate, the committed step in the de novo pyrimidine nucleotide biosynthesis pathway. The protein is Aspartate carbamoyltransferase catalytic subunit of Nitratidesulfovibrio vulgaris (strain ATCC 29579 / DSM 644 / CCUG 34227 / NCIMB 8303 / VKM B-1760 / Hildenborough) (Desulfovibrio vulgaris).